The chain runs to 178 residues: ATP synthase subunit b, chloroplastic (178 aa).

The chain crosses the membrane as a helical span at residues 26–46 (TNLINIIILLIILFYFLKGLL).

The protein belongs to the ATPase B chain family. F-type ATPases have 2 components, F(1) - the catalytic core - and F(0) - the membrane proton channel. F(1) has five subunits: alpha(3), beta(3), gamma(1), delta(1), epsilon(1). F(0) has four main subunits: a(1), b(1), b'(1) and c(10-14). The alpha and beta chains form an alternating ring which encloses part of the gamma chain. F(1) is attached to F(0) by a central stalk formed by the gamma and epsilon chains, while a peripheral stalk is formed by the delta, b and b' chains.

The protein resides in the plastid. The protein localises to the chloroplast thylakoid membrane. In terms of biological role, f(1)F(0) ATP synthase produces ATP from ADP in the presence of a proton or sodium gradient. F-type ATPases consist of two structural domains, F(1) containing the extramembraneous catalytic core and F(0) containing the membrane proton channel, linked together by a central stalk and a peripheral stalk. During catalysis, ATP synthesis in the catalytic domain of F(1) is coupled via a rotary mechanism of the central stalk subunits to proton translocation. Functionally, component of the F(0) channel, it forms part of the peripheral stalk, linking F(1) to F(0). This Vaucheria litorea (Yellow-green alga) protein is ATP synthase subunit b, chloroplastic.